Consider the following 126-residue polypeptide: Large ribosomal subunit protein bL12 (126 aa).

The protein belongs to the bacterial ribosomal protein bL12 family. In terms of assembly, homodimer. Part of the ribosomal stalk of the 50S ribosomal subunit. Forms a multimeric L10(L12)X complex, where L10 forms an elongated spine to which 2 to 4 L12 dimers bind in a sequential fashion. Binds GTP-bound translation factors.

Functionally, forms part of the ribosomal stalk which helps the ribosome interact with GTP-bound translation factors. Is thus essential for accurate translation. The polypeptide is Large ribosomal subunit protein bL12 (Paracidovorax citrulli (strain AAC00-1) (Acidovorax citrulli)).